The chain runs to 516 residues: H/ACA ribonucleoprotein complex subunit DKC1 (516 aa).

The segment at Met-1 to Asp-24 is disordered. Asp-123 functions as the Nucleophile in the catalytic mechanism. The PUA domain maps to His-294–Met-369. Residues Lys-422–Glu-516 are disordered. A compositionally biased stretch (basic and acidic residues) spans Glu-434–Glu-446. Pro residues predominate over residues Ser-453–Glu-464. A coiled-coil region spans residues Pro-463–Glu-516. Basic residues predominate over residues Lys-469–Lys-478.

Belongs to the pseudouridine synthase TruB family. Part of the H/ACA small nucleolar ribonucleoprotein (H/ACA snoRNP) complex, which contains NHP2/NOLA2, GAR1/NOLA1, NOP10/NOLA3, and DKC1/NOLA4, which is presumed to be the catalytic subunit. The complex contains a stable core formed by binding of one or two NOP10-DKC1 heterodimers to NHP2; GAR1 subsequently binds to this core via DKC1. The complex binds a box H/ACA small nucleolar RNA (snoRNA), which may target the specific site of modification within the RNA substrate.

It localises to the nucleus. Its subcellular location is the nucleolus. The protein localises to the cajal body. The catalysed reaction is uridine in 5S rRNA = pseudouridine in 5S rRNA. Its function is as follows. Catalytic subunit of H/ACA small nucleolar ribonucleoprotein (H/ACA snoRNP) complex, which catalyzes pseudouridylation of rRNA. This involves the isomerization of uridine such that the ribose is subsequently attached to C5, instead of the normal N1. Each rRNA can contain up to 100 pseudouridine ('psi') residues, which may serve to stabilize the conformation of rRNAs. Required for ribosome biogenesis and telomere maintenance. The protein is H/ACA ribonucleoprotein complex subunit DKC1 (DKC1) of Gallus gallus (Chicken).